Consider the following 575-residue polypeptide: uncharacterized protein (575 aa).

Residues 507 to 536 form a disordered region; sequence AHRKVGELNNKKPMTGEKPPPKNKKSPKYK.

This is an uncharacterized protein from Ostreid herpesvirus 1 (isolate France) (OsHV-1).